Reading from the N-terminus, the 804-residue chain is Lon protease 2 (804 aa).

In terms of domain architecture, Lon N-terminal spans 6-199 (MPVCPVRGSV…AVLVLLEAEL (194 aa)). Position 362 to 369 (362 to 369 (GPPGVGKT)) interacts with ATP. In terms of domain architecture, Lon proteolytic spans 598 to 779 (EPQVGVATGM…DQVLDLALVG (182 aa)). Active-site residues include Ser685 and Lys728.

Belongs to the peptidase S16 family. As to quaternary structure, homohexamer. Organized in a ring with a central cavity.

It localises to the cytoplasm. It carries out the reaction Hydrolysis of proteins in presence of ATP.. ATP-dependent serine protease that mediates the selective degradation of mutant and abnormal proteins as well as certain short-lived regulatory proteins. Required for cellular homeostasis and for survival from DNA damage and developmental changes induced by stress. Degrades polypeptides processively to yield small peptide fragments that are 5 to 10 amino acids long. Binds to DNA in a double-stranded, site-specific manner. The chain is Lon protease 2 from Thermus thermophilus (strain ATCC BAA-163 / DSM 7039 / HB27).